Consider the following 121-residue polypeptide: Large ribosomal subunit protein bL12 (121 aa).

Belongs to the bacterial ribosomal protein bL12 family. As to quaternary structure, homodimer. Part of the ribosomal stalk of the 50S ribosomal subunit. Forms a multimeric L10(L12)X complex, where L10 forms an elongated spine to which 2 to 4 L12 dimers bind in a sequential fashion. Binds GTP-bound translation factors.

Its function is as follows. Forms part of the ribosomal stalk which helps the ribosome interact with GTP-bound translation factors. Is thus essential for accurate translation. The protein is Large ribosomal subunit protein bL12 of Streptococcus equi subsp. equi (strain 4047).